A 245-amino-acid chain; its full sequence is Orotidine 5'-phosphate decarboxylase (245 aa).

Substrate is bound by residues aspartate 22, lysine 44, 71 to 80 (DLKFHDIPNT), threonine 131, arginine 192, glutamine 201, glycine 221, and arginine 222. The active-site Proton donor is the lysine 73.

This sequence belongs to the OMP decarboxylase family. Type 1 subfamily. In terms of assembly, homodimer.

The enzyme catalyses orotidine 5'-phosphate + H(+) = UMP + CO2. Its pathway is pyrimidine metabolism; UMP biosynthesis via de novo pathway; UMP from orotate: step 2/2. In terms of biological role, catalyzes the decarboxylation of orotidine 5'-monophosphate (OMP) to uridine 5'-monophosphate (UMP). This chain is Orotidine 5'-phosphate decarboxylase, found in Shigella dysenteriae serotype 1 (strain Sd197).